A 254-amino-acid chain; its full sequence is MGQKVNPIGFRLGVVKGWESNWYGGKTFADKLVEDEQIRKYVLARIPKGGISKIVIERTIKRVTLTINTARPGVVIGKGGAEVDKIKEELKKITGKDVQINIFEIKRPEMEALLVGESIAQQLKARISYRRAMKQAIAGTMRVGALGIKIKLSGRLGGAEMARTDQYKEGRIPLHTLRADIDYAVSEALTVYGKIGIKVWIFKGEVYGKRDLSPNVGNAASGASSSSNNDNASPNQGGPRRKRGGEGNRKKSNK.

The region spanning 38–106 (IRKYVLARIP…DVQINIFEIK (69 aa)) is the KH type-2 domain. A compositionally biased stretch (low complexity) spans 215-238 (NVGNAASGASSSSNNDNASPNQGG). Residues 215 to 254 (NVGNAASGASSSSNNDNASPNQGGPRRKRGGEGNRKKSNK) form a disordered region. Residues 244-254 (GGEGNRKKSNK) show a composition bias toward basic and acidic residues.

This sequence belongs to the universal ribosomal protein uS3 family. Part of the 30S ribosomal subunit. Forms a tight complex with proteins S10 and S14.

Functionally, binds the lower part of the 30S subunit head. Binds mRNA in the 70S ribosome, positioning it for translation. The sequence is that of Small ribosomal subunit protein uS3 from Cytophaga hutchinsonii (strain ATCC 33406 / DSM 1761 / CIP 103989 / NBRC 15051 / NCIMB 9469 / D465).